The following is a 156-amino-acid chain: ATP synthase subunit b (156 aa).

The chain crosses the membrane as a helical span at residues 7–27 (LFLQAVVFAILVWFTMKFVWP).

This sequence belongs to the ATPase B chain family. F-type ATPases have 2 components, F(1) - the catalytic core - and F(0) - the membrane proton channel. F(1) has five subunits: alpha(3), beta(3), gamma(1), delta(1), epsilon(1). F(0) has three main subunits: a(1), b(2) and c(10-14). The alpha and beta chains form an alternating ring which encloses part of the gamma chain. F(1) is attached to F(0) by a central stalk formed by the gamma and epsilon chains, while a peripheral stalk is formed by the delta and b chains.

The protein resides in the cell inner membrane. In terms of biological role, f(1)F(0) ATP synthase produces ATP from ADP in the presence of a proton or sodium gradient. F-type ATPases consist of two structural domains, F(1) containing the extramembraneous catalytic core and F(0) containing the membrane proton channel, linked together by a central stalk and a peripheral stalk. During catalysis, ATP synthesis in the catalytic domain of F(1) is coupled via a rotary mechanism of the central stalk subunits to proton translocation. Its function is as follows. Component of the F(0) channel, it forms part of the peripheral stalk, linking F(1) to F(0). The polypeptide is ATP synthase subunit b (Polaromonas naphthalenivorans (strain CJ2)).